Here is a 236-residue protein sequence, read N- to C-terminus: uncharacterized protein (236 aa).

Residues 1–29 are disordered; that stretch reads MNNEKNKQDRENLNRQDERKSSEIKSERK.

This is an uncharacterized protein from Staphylococcus aureus.